Reading from the N-terminus, the 629-residue chain is Dual specificity tyrosine-phosphorylation-regulated kinase 1B (629 aa).

At tyrosine 63 the chain carries Phosphotyrosine. The segment at 67-86 (KKRRAQQAPPQDSSTKKEKK) is disordered. The short motif at 69 to 86 (RRAQQAPPQDSSTKKEKK) is the Bipartite nuclear localization signal element. A phosphotyrosine mark is found at tyrosine 92 and tyrosine 111. Positions 111 to 431 (YEIDSLIGKG…PLGALQHGFF (321 aa)) constitute a Protein kinase domain. 117–125 (IGKGSFGQV) lines the ATP pocket. Tyrosine 129 bears the Phosphotyrosine mark. Lysine 140 is an ATP binding site. Tyrosine 171 carries the post-translational modification Phosphotyrosine. 190-193 (FELL) provides a ligand contact to ATP. Aspartate 239 serves as the catalytic Proton acceptor. Serine 262 bears the Phosphoserine mark. Tyrosine 271 carries the phosphotyrosine; by autocatalysis modification. The residue at position 273 (tyrosine 273) is a Phosphotyrosine. The tract at residues 380-399 (GVQTGGPGGRRAGEPGHSPA) is disordered. Tyrosine 401 bears the Phosphotyrosine mark. Disordered stretches follow at residues 436 to 480 (DEAT…SNDN) and 496 to 629 (PITD…AASS). A compositionally biased stretch (low complexity) spans 438 to 477 (ATNTGPAGSSASTSPAPLDTCPSSSTASSISSSGGSSGSS). Residues 480–520 (NRAYRYSNRYCGGPGPPITDCEMNSPQVLPSQPLRPWAGGD) form an interaction with RANBP9 region. Composition is skewed to pro residues over residues 552-562 (PPSPTSPPPPE) and 574-585 (DCSPPPPAPAPQ). The residue at position 624 (serine 624) is a Phosphoserine.

This sequence belongs to the protein kinase superfamily. CMGC Ser/Thr protein kinase family. MNB/DYRK subfamily. As to quaternary structure, dimer. Interacts with DCOHM, MAP2K3/MKK3, RANBP9 and TCF1/HNF1A. Part of a complex consisting of RANBP9, RAN, DYRK1B and COPS5. Interacts with DCAF7. Interacts with RNF169. Post-translationally, phosphorylated by MAP kinase. Tyrosine phosphorylation may be required for dimerization. In terms of tissue distribution, isoform 1 and isoform 2 are broadly expressed. Isoform 3 seems specific for skeletal muscle (at protein level).

The protein resides in the nucleus. The protein localises to the nucleolus. It is found in the chromosome. It catalyses the reaction L-seryl-[protein] + ATP = O-phospho-L-seryl-[protein] + ADP + H(+). It carries out the reaction L-threonyl-[protein] + ATP = O-phospho-L-threonyl-[protein] + ADP + H(+). The enzyme catalyses L-tyrosyl-[protein] + ATP = O-phospho-L-tyrosyl-[protein] + ADP + H(+). With respect to regulation, inhibited by RANBP9. Dual-specificity kinase which possesses both serine/threonine and tyrosine kinase activities. Plays an essential role in ribosomal DNA (rDNA) double-strand break repair and rDNA copy number maintenance. During DNA damage, mediates transcription silencing in part via phosphorylating and enforcing DSB accumulation of the histone methyltransferase EHMT2. Enhances the transcriptional activity of TCF1/HNF1A and FOXO1. Inhibits epithelial cell migration. Mediates colon carcinoma cell survival in mitogen-poor environments. Inhibits the SHH and WNT1 pathways, thereby enhancing adipogenesis. In addition, promotes expression of the gluconeogenic enzyme glucose-6-phosphatase catalytic subunit 1 (G6PC1). This is Dual specificity tyrosine-phosphorylation-regulated kinase 1B (Dyrk1b) from Mus musculus (Mouse).